The following is a 302-amino-acid chain: MNLDDEFDDDLDAERVPNLGIVAESISQLGIDVLLSGETGTGKDTTARRIHNMSGRQGRFVPMNCAAIPESLAESELFGVVSGAYTGADRSRMGYIEAAQGGTLYLDEIDSMPLALQAKLLRVLETRALERLGSTSTIHLDICVIASAQASLDDAVEEGKFRRDLYFRLNVLTLKLPPLRDQPERILPLFTRFVAASAKELNVAIPDVCPLLQQVLTGHRWPGNIRELKAAAKRHVLGFPLLGADSQTEEHMACGLKFQLRAIEKALIQQALKRHRNCIDAASLELDIPRRTLYRRIKELSI.

One can recognise a Sigma-54 factor interaction domain in the interval 9–237 (DDLDAERVPN…LKAAAKRHVL (229 aa)). ATP-binding positions include 37–44 (GETGTGKD) and 99–108 (AQGGTLYLDE). The H-T-H motif DNA-binding region spans 279 to 298 (IDAASLELDIPRRTLYRRIK).

Its function is as follows. Regulates the activation of the sigma factor HrpL which itself induces the expression of hprD as well as other hrp loci which are involved in plant pathogenicity, hrmA and avr genes. Probably interacts with sigma-54. The sequence is that of Pathogenicity locus probable regulatory protein HrpS (hrpS) from Pseudomonas syringae pv. syringae.